Reading from the N-terminus, the 1172-residue chain is DNA-directed RNA polymerase subunit beta (1172 aa).

The protein belongs to the RNA polymerase beta chain family. In terms of assembly, the RNAP catalytic core consists of 2 alpha, 1 beta, 1 beta' and 1 omega subunit. When a sigma factor is associated with the core the holoenzyme is formed, which can initiate transcription.

It carries out the reaction RNA(n) + a ribonucleoside 5'-triphosphate = RNA(n+1) + diphosphate. DNA-dependent RNA polymerase catalyzes the transcription of DNA into RNA using the four ribonucleoside triphosphates as substrates. The chain is DNA-directed RNA polymerase subunit beta from Thermosipho melanesiensis (strain DSM 12029 / CIP 104789 / BI429).